The following is a 445-amino-acid chain: Phosphoglucosamine mutase (445 aa).

The active-site Phosphoserine intermediate is the Ser102. The Mg(2+) site is built by Ser102, Asp241, Asp243, and Asp245. Ser102 is modified (phosphoserine).

This sequence belongs to the phosphohexose mutase family. Mg(2+) is required as a cofactor. In terms of processing, activated by phosphorylation.

It carries out the reaction alpha-D-glucosamine 1-phosphate = D-glucosamine 6-phosphate. Functionally, catalyzes the conversion of glucosamine-6-phosphate to glucosamine-1-phosphate. This Rhodococcus erythropolis (strain PR4 / NBRC 100887) protein is Phosphoglucosamine mutase.